The primary structure comprises 1136 residues: Collagen alpha-1(XIX) chain (1136 aa).

The N-terminal stretch at 1-23 is a signal peptide; sequence MRHTGSWKLWTWVTTFLLPACTC. Asn47 is a glycosylation site (N-linked (GlcNAc...) asparagine). One can recognise a Laminin G-like domain in the interval 47–231; it reads NKSELSGFDL…LHQLRIYCNA (185 aa). 4 disordered regions span residues 252–272, 289–673, 699–1005, and 1043–1136; these read DFGSTTSSWGTSNTGKMSSYL, EEAG…PGDP, GLKS…TPAD, and SAQA…AGGK. Residues 254–266 are compositionally biased toward low complexity; sequence GSTTSSWGTSNTG. A triple-helical region 1 (COL1) region spans residues 289 to 348; that stretch reads EEAGLPGTLRSIGHKGDKGEPGEHGLDGTPGLPGQKGEQGLEGIKGEIGEKGEPGAKGDS. Collagen-like domains lie at 292–346, 347–388, and 389–430; these read GLPG…GAKG, DSGL…ALTG, and SIGI…GLQG. Composition is skewed to basic and acidic residues over residues 302–314 and 332–344; these read HKGDKGEPGEHGL and IKGEIGEKGEPGA. Residues 367–426 are triple-helical region 2 (COL2); it reads GPPGPKGDKGDMGPPGPPALTGSIGIQGPQGPPGKEGQRGRRGKTGPPGNPGPPGPPGPP. Residues 387–401 are compositionally biased toward low complexity; the sequence is TGSIGIQGPQGPPGK. A compositionally biased stretch (pro residues) spans 414-426; the sequence is PGNPGPPGPPGPP. Over residues 428-437 the composition is skewed to low complexity; that stretch reads LQGLQQPFGG. The triple-helical region 3 (COL3) stretch occupies residues 442-682; sequence GTGEHGASGP…PIALPLLGDI (241 aa). Over residues 472–490 the composition is skewed to basic and acidic residues; that stretch reads HKGEPGEPLTKGEKGDRGE. 2 stretches are compositionally biased toward low complexity: residues 511–523 and 567–577; these read LLGSPGLKGQQGP and PGLKGDAGPPG. Collagen-like domains lie at 519–577, 578–618, 620–673, 722–777, 778–810, and 833–891; these read GQQG…GPPG, ISLP…GPPG, GIPG…PGDP, KGDV…GPPG, LTGRTGHPGPTGAKGDKGSEGPPGKPGPPGPPG, and GYPG…APGP. Residues 634-645 show a composition bias toward low complexity; that stretch reads PGIQGPRGLPGL. A triple-helical region 4 (COL4) region spans residues 694–812; it reads QANVPGLKSI…PGPPGPPGVP (119 aa). Composition is skewed to basic and acidic residues over residues 714–725 and 737–758; these read GKYDPAARKGDV and EGPKGSKGERGYPGIHGEKGDE. The span at 764 to 788 shows a compositional bias: low complexity; it reads PGLSGAPGPTGPPGLTGRTGHPGPT. Composition is skewed to pro residues over residues 800-811 and 834-846; these read PGKPGPPGPPGV and YPGPPGPPGPKGD. Residues 827 to 1006 are triple-helical region 5 (COL5); that stretch reads GGVNVPGYPG…PGIPGTPADA (180 aa). The span at 877–886 shows a compositional bias: low complexity; that stretch reads PGIAGISGKP. Basic and acidic residues predominate over residues 937–948; the sequence is PGDRGPKGERGD. A Cell attachment site motif is present at residues 946 to 948; sequence RGD. The tract at residues 1048–1105 is triple-helical region 6 (COL6); that stretch reads GRPGPPGKDGLPGPPGDPGPQGYRGQKGERGEPGIGLPGSPGLPGSSAVGLPGSPGAP. A compositionally biased stretch (low complexity) spans 1087-1101; sequence SPGLPGSSAVGLPGS. The segment covering 1102 to 1113 has biased composition (pro residues); it reads PGAPGPQGPPGP.

Belongs to the fibril-associated collagens with interrupted helices (FACIT) family. As to quaternary structure, oligomer; disulfide-linked. Prolines at the third position of the tripeptide repeating unit (G-X-Y) are hydroxylated in some or all of the chains.

It is found in the secreted. The protein resides in the extracellular space. Its subcellular location is the extracellular matrix. May act as a cross-bridge between fibrils and other extracellular matrix molecules. Involved in skeletal myogenesis in the developing esophagus. May play a role in organization of the pericellular matrix or the sphinteric smooth muscle. In Mus musculus (Mouse), this protein is Collagen alpha-1(XIX) chain.